A 360-amino-acid chain; its full sequence is C-C chemokine receptor type 4 (360 aa).

The Extracellular portion of the chain corresponds to 1-39; sequence MNPTDIADTTLDESIYSNYYLYESIPKPCTKEGIKAFGE. The helical transmembrane segment at 40–67 threads the bilayer; it reads LFLPPLYSLVFVFGLLGNSVVVLVLFKY. The Cytoplasmic portion of the chain corresponds to 68-77; the sequence is KRLRSMTDVY. A helical membrane pass occupies residues 78–98; it reads LLNLAISDLLFVFSLPFWGYY. Over 99–111 the chain is Extracellular; it reads AADQWVFGLGLCK. Cys110 and Cys187 are joined by a disulfide. Residues 112–133 traverse the membrane as a helical segment; that stretch reads MISWMYLVGFYSGIFFVMLMSI. Residues 134–150 lie on the Cytoplasmic side of the membrane; that stretch reads DRYLAIVHAVFSLRART. Residues 151–175 form a helical membrane-spanning segment; it reads LTYGVITSLATWSVAVFASLPGFLF. Residues 176–206 are Extracellular-facing; the sequence is STCYTERNHTYCKTKYSLNSTTWKVLSSLEI. Residues Asn183 and Asn194 are each glycosylated (N-linked (GlcNAc...) asparagine). A helical transmembrane segment spans residues 207 to 226; it reads NILGLVIPLGIMLFCYSMII. The Cytoplasmic segment spans residues 227–242; it reads RTLQHCKNEKKNKAVK. The helical transmembrane segment at 243–267 threads the bilayer; sequence MIFAVVVLFLGFWTPYNIVLFLETL. Over 268 to 284 the chain is Extracellular; that stretch reads VELEVLQDCTFERYLDY. A helical transmembrane segment spans residues 285–308; that stretch reads AIQATETLAFVHCCLNPIIYFFLG. Residues 309–360 are Cytoplasmic-facing; that stretch reads EKFRKYILQLFKTCRGLFVLCQYCGLLQIYSADTPSSSYTQSTMDHDLHDAL.

This sequence belongs to the G-protein coupled receptor 1 family. Post-translationally, in natural killer cells, CCL22 binding induces phosphorylation on yet undefined Ser/Thr residues, most probably by beta-adrenergic receptor kinases 1 and 2. As to expression, predominantly expressed in the thymus, in peripheral blood leukocytes, including T-cells, mostly CD4+ cells, and basophils, and in platelets; at lower levels, in the spleen and in monocytes. Detected also in macrophages, IL-2-activated natural killer cells and skin-homing memory T-cells, mostly the ones expressing the cutaneous lymphocyte antigen (CLA). Expressed in brain microvascular and coronary artery endothelial cells.

Its subcellular location is the cell membrane. In terms of biological role, high affinity receptor for the C-C type chemokines CCL17/TARC, CCL22/MDC and CKLF isoform 1/CKLF1. The activity of this receptor is mediated by G(i) proteins which activate a phosphatidylinositol-calcium second messenger system. Can function as a chemoattractant homing receptor on circulating memory lymphocytes and as a coreceptor for some primary HIV-2 isolates. In the CNS, could mediate hippocampal-neuron survival. The sequence is that of C-C chemokine receptor type 4 (CCR4) from Homo sapiens (Human).